A 352-amino-acid polypeptide reads, in one-letter code: C-X-C chemokine receptor type 4 (352 aa).

The important for chemokine binding and signaling stretch occupies residues 1 to 21 (MEGISIYTSDNYTEEIGSGDY). The Extracellular segment spans residues 1–38 (MEGISIYTSDNYTEEIGSGDYDSIKEPCFREENAHFNR). Tyrosine 7 carries the sulfotyrosine modification. The N-linked (GlcNAc...) asparagine glycan is linked to asparagine 11. Tyrosine 12 bears the Sulfotyrosine mark. A glycan (O-linked (Xyl...) (chondroitin sulfate) serine) is linked at serine 18. Sulfotyrosine is present on tyrosine 21. Cystine bridges form between cysteine 28-cysteine 274 and cysteine 109-cysteine 186. A helical membrane pass occupies residues 39–63 (IFLPTIYSIIFLTGIVGNGLVILVM). Residues 64 to 77 (GYQKKLRSMTDKYR) lie on the Cytoplasmic side of the membrane. The chain crosses the membrane as a helical span at residues 78 to 99 (LHLSVADLLFVITLPFWAVDAV). Residues 94-97 (WAVD) are chemokine binding. Residues 100-110 (ANWYFGKFLCK) lie on the Extracellular side of the membrane. The helical transmembrane segment at 111 to 130 (AVHVIYTVNLYSSVLILAFI) threads the bilayer. The tract at residues 113–117 (HVIYT) is chemokine binding. The Cytoplasmic portion of the chain corresponds to 131–154 (SLDRYLAIVHATNSQRPRKLLAEK). The short motif at 133–135 (DRY) is the Important for signaling element. The segment at 135–147 (YLAIVHATNSQRP) is involved in dimerization; when bound to chemokine. Residues 155-174 (VVYVGVWIPALLLTIPDFIF) form a helical membrane-spanning segment. Topologically, residues 175–195 (ANVSEADDRYICDRFYPNDLW) are extracellular. Residues 186–190 (CDRFY) form a chemokine binding, important for signaling region. Residues 191 to 210 (PNDLWVVVFQFQHIMVGLIL) are involved in dimerization. The helical transmembrane segment at 196-216 (VVVFQFQHIMVGLILPGIVIL) threads the bilayer. Topologically, residues 217–241 (SCYCIIISKLSHSKGHQKRKALKTT) are cytoplasmic. A helical transmembrane segment spans residues 242-261 (VILILAFFACWLPYYIGISI). The Extracellular portion of the chain corresponds to 262–282 (DSFILLEIIRQGCEFENTVHK). Residues 266 to 268 (LLE) form an involved in dimerization region. The chain crosses the membrane as a helical span at residues 283-302 (WISITEALAFFHCCLNPILY). The Cytoplasmic portion of the chain corresponds to 303–352 (AFLGAKFKTSAQHALTSVSRGSSLKILSKGKRGGHSSVSTESESSSFHSS). A phosphoserine mark is found at serine 319 and serine 321. Phosphoserine; by PKC and GRK6 occurs at positions 324 and 325. Positions 329 to 352 (LSKGKRGGHSSVSTESESSSFHSS) are disordered. Serine 330 carries the phosphoserine; by GRK6 modification. Residue lysine 331 forms a Glycyl lysine isopeptide (Lys-Gly) (interchain with G-Cter in ubiquitin) linkage. Residues 337–352 (HSSVSTESESSSFHSS) show a composition bias toward low complexity. At serine 339 the chain carries Phosphoserine; by GRK6. Phosphoserine occurs at positions 348 and 351.

This sequence belongs to the G-protein coupled receptor 1 family. In terms of assembly, monomer. Can form homodimers. Interacts with CD164. Interacts with ARRB2; the interaction is dependent on the C-terminal phosphorylation of CXCR4 and allows activation of MAPK1 and MAPK3. Interacts with ARR3; the interaction is dependent on the C-terminal phosphorylation of CXCR4 and modulates calcium mobilization. Interacts with RNF113A; the interaction, enhanced by CXCL12, promotes CXCR4 ubiquitination and subsequent degradation. Interacts (via the cytoplasmic C-terminal) with ITCH (via the WW domains I and II); the interaction, enhanced by CXCL12, promotes CXCR4 ubiquitination and leads to its degradation. Interacts with extracellular ubiquitin. Interacts with DBN1; this interaction is enhanced by antigenic stimulation. Following LPS binding, may form a complex with GDF5, HSP90AA1 and HSPA8. Phosphorylated on agonist stimulation. Rapidly phosphorylated on serine and threonine residues in the C-terminal. Phosphorylation at Ser-324 and Ser-325 leads to recruitment of ITCH, ubiquitination and protein degradation. Post-translationally, ubiquitinated after ligand binding, leading to its degradation. Ubiquitinated by ITCH at the cell membrane on agonist stimulation. The ubiquitin-dependent mechanism, endosomal sorting complex required for transport (ESCRT), then targets CXCR4 for lysosomal degradation. This process is dependent also on prior Ser-/Thr-phosphorylation in the C-terminal of CXCR4. Also binding of ARRB1 to STAM negatively regulates CXCR4 sorting to lysosomes though modulating ubiquitination of SFR5S. In terms of processing, sulfation is required for efficient binding of CXCL12/SDF-1alpha and promotes its dimerization. O- and N-glycosylated. N-glycosylation can mask coreceptor function. The O-glycosylation chondroitin sulfate attachment does not affect interaction with CXCL12/SDF-1alpha nor its coreceptor activity.

It localises to the cell membrane. The protein localises to the cell junction. Its subcellular location is the early endosome. The protein resides in the late endosome. It is found in the lysosome. Functionally, receptor for the C-X-C chemokine CXCL12/SDF-1 that transduces a signal by increasing intracellular calcium ion levels and enhancing MAPK1/MAPK3 activation. Involved in the AKT signaling cascade. Plays a role in regulation of cell migration, e.g. during wound healing. Acts as a receptor for extracellular ubiquitin; leading to enhanced intracellular calcium ions and reduced cellular cAMP levels. Binds bacterial lipopolysaccharide (LPS) et mediates LPS-induced inflammatory response, including TNF secretion by monocytes. Involved in hematopoiesis and in cardiac ventricular septum formation. Also plays an essential role in vascularization of the gastrointestinal tract, probably by regulating vascular branching and/or remodeling processes in endothelial cells. Involved in cerebellar development. In the CNS, could mediate hippocampal-neuron survival. The protein is C-X-C chemokine receptor type 4 (CXCR4) of Callithrix jacchus (White-tufted-ear marmoset).